Here is a 129-residue protein sequence, read N- to C-terminus: Antimicrobial peptide NK-lysin (129 aa).

Residues 1 to 6 (PGLAFS) form the signal peptide. A propeptide spanning residues 7-46 (GLTPEHSALARAHPCDGEQFCQNLAPEDPQGDQLLQREEL) is cleaved from the precursor. Positions 46 to 126 (LGLICESCRK…VDIKICKEKT (81 aa)) constitute a Saposin B-type domain. Cystine bridges form between Cys50–Cys122, Cys53–Cys116, and Cys81–Cys91. The propeptide occupies 125–129 (KTGLI).

As to expression, cytotoxic T and NK cells.

It is found in the secreted. In terms of biological role, may be an effector molecule of cytotoxic activity. High activity against E.coli and B.megaterium, moderate against A.calcoaceticus and S.pyogenes. No activity against P.aeruginosa, S.aureus and Salmonella. Has some antifungal activity against C.albicans. This chain is Antimicrobial peptide NK-lysin (NKL), found in Sus scrofa (Pig).